A 271-amino-acid polypeptide reads, in one-letter code: 4-hydroxy-tetrahydrodipicolinate reductase (271 aa).

Residues 11–16 (GGSGRM) and E37 each bind NAD(+). R38 provides a ligand contact to NADP(+). NAD(+) is bound by residues 101 to 103 (GTT) and 125 to 128 (APNM). Residue H158 is the Proton donor/acceptor of the active site. A (S)-2,3,4,5-tetrahydrodipicolinate-binding site is contributed by H159. K162 (proton donor) is an active-site residue. Residue 168–169 (GT) participates in (S)-2,3,4,5-tetrahydrodipicolinate binding.

It belongs to the DapB family.

The protein localises to the cytoplasm. It carries out the reaction (S)-2,3,4,5-tetrahydrodipicolinate + NAD(+) + H2O = (2S,4S)-4-hydroxy-2,3,4,5-tetrahydrodipicolinate + NADH + H(+). The enzyme catalyses (S)-2,3,4,5-tetrahydrodipicolinate + NADP(+) + H2O = (2S,4S)-4-hydroxy-2,3,4,5-tetrahydrodipicolinate + NADPH + H(+). It participates in amino-acid biosynthesis; L-lysine biosynthesis via DAP pathway; (S)-tetrahydrodipicolinate from L-aspartate: step 4/4. Functionally, catalyzes the conversion of 4-hydroxy-tetrahydrodipicolinate (HTPA) to tetrahydrodipicolinate. This chain is 4-hydroxy-tetrahydrodipicolinate reductase, found in Shewanella loihica (strain ATCC BAA-1088 / PV-4).